The primary structure comprises 50 residues: uncharacterized protein (50 aa).

This is an uncharacterized protein from Ornithodoros (relapsing fever ticks).